A 175-amino-acid polypeptide reads, in one-letter code: Succinate dehydrogenase assembly factor 2, mitochondrial (175 aa).

Positions 42 to 71 (PFSDPELAHANNSLPSNSEEWPLPEPLDRT) are disordered. Polar residues predominate over residues 51 to 60 (ANNSLPSNSE).

This sequence belongs to the SDHAF2 family. In terms of assembly, interacts with the flavoprotein subunit within the SDH catalytic dimer.

Its subcellular location is the mitochondrion matrix. Plays an essential role in the assembly of succinate dehydrogenase (SDH), an enzyme complex (also referred to as respiratory complex II) that is a component of both the tricarboxylic acid (TCA) cycle and the mitochondrial electron transport chain, and which couples the oxidation of succinate to fumarate with the reduction of ubiquinone (coenzyme Q) to ubiquinol. Required for flavinylation (covalent attachment of FAD) of the flavoprotein subunit of the SDH catalytic dimer. This is Succinate dehydrogenase assembly factor 2, mitochondrial from Cryptococcus neoformans var. neoformans serotype D (strain B-3501A) (Filobasidiella neoformans).